A 274-amino-acid polypeptide reads, in one-letter code: NH(3)-dependent NAD(+) synthetase (274 aa).

46–53 provides a ligand contact to ATP; it reads GISGGQDS. Position 52 (aspartate 52) interacts with Mg(2+). Deamido-NAD(+) is bound at residue arginine 140. Threonine 160 contacts ATP. Position 165 (glutamate 165) interacts with Mg(2+). Positions 173 and 180 each coordinate deamido-NAD(+). ATP contacts are provided by lysine 189 and threonine 211. A deamido-NAD(+)-binding site is contributed by 260–261; that stretch reads HK.

The protein belongs to the NAD synthetase family. Homodimer.

The catalysed reaction is deamido-NAD(+) + NH4(+) + ATP = AMP + diphosphate + NAD(+) + H(+). It functions in the pathway cofactor biosynthesis; NAD(+) biosynthesis; NAD(+) from deamido-NAD(+) (ammonia route): step 1/1. Catalyzes the ATP-dependent amidation of deamido-NAD to form NAD. Uses ammonia as a nitrogen source. This Lactococcus lactis subsp. cremoris (strain MG1363) protein is NH(3)-dependent NAD(+) synthetase.